We begin with the raw amino-acid sequence, 371 residues long: MDFQLQAVDDNARAGVLNLAHSQVETPVFMPVGTQGCIKSLDAMDAQEILGAKLILANTYHMYLRPGEKVVEQLGGLHRFAQFQGSFLTDSGGFQAFSLSDNVKLQEDGIVFKSHIDGSKHLFTPIKVLDIQYSLNSDIMMVLDDLVGLPAPLKRLEESIKRSAKWANMSLEYHKENNRPNNNLFAIIQGGTHLKMRSLSVGLTHEGFDGYAIGGLAVGESVDEMLETIAHTAPLLPKDKPRYLMGVGTPENILDAISLGVDMFDCVMPTRNARNATLFTHSGKISIKNAPYKLDDTPIEENCACYACKRYSKAYLHHLFRAKELTYARLASLHNLHFYLELVKNARNAILEKRFLSFKKEFLEKYHSCSH.

Asp-90 acts as the Proton acceptor in catalysis. Substrate-binding positions include 90–94, Asp-144, Gln-189, and Gly-215; that span reads DSGGF. Residues 246–252 are RNA binding; the sequence is GVGTPEN. The Nucleophile role is filled by Asp-265. Positions 270 to 274 are RNA binding; important for wobble base 34 recognition; that stretch reads TRNAR. Residues Cys-303, Cys-305, Cys-308, and His-334 each coordinate Zn(2+).

The protein belongs to the queuine tRNA-ribosyltransferase family. As to quaternary structure, homodimer. Within each dimer, one monomer is responsible for RNA recognition and catalysis, while the other monomer binds to the replacement base PreQ1. Zn(2+) serves as cofactor.

It catalyses the reaction 7-aminomethyl-7-carbaguanine + guanosine(34) in tRNA = 7-aminomethyl-7-carbaguanosine(34) in tRNA + guanine. It participates in tRNA modification; tRNA-queuosine biosynthesis. Catalyzes the base-exchange of a guanine (G) residue with the queuine precursor 7-aminomethyl-7-deazaguanine (PreQ1) at position 34 (anticodon wobble position) in tRNAs with GU(N) anticodons (tRNA-Asp, -Asn, -His and -Tyr). Catalysis occurs through a double-displacement mechanism. The nucleophile active site attacks the C1' of nucleotide 34 to detach the guanine base from the RNA, forming a covalent enzyme-RNA intermediate. The proton acceptor active site deprotonates the incoming PreQ1, allowing a nucleophilic attack on the C1' of the ribose to form the product. After dissociation, two additional enzymatic reactions on the tRNA convert PreQ1 to queuine (Q), resulting in the hypermodified nucleoside queuosine (7-(((4,5-cis-dihydroxy-2-cyclopenten-1-yl)amino)methyl)-7-deazaguanosine). In Helicobacter pylori (strain J99 / ATCC 700824) (Campylobacter pylori J99), this protein is Queuine tRNA-ribosyltransferase.